A 317-amino-acid chain; its full sequence is Putative pyridoxal kinase BUD17 (317 aa).

The substrate site is built by S16 and Y128. ATP contacts are provided by residues 190–191 and 220–232; these read TS and EIPKINAKFSGSG. A substrate-binding site is contributed by D233.

The protein belongs to the pyridoxine kinase family. A divalent metal cation is required as a cofactor.

The protein localises to the cytoplasm. It is found in the nucleus. It catalyses the reaction pyridoxal + ATP = pyridoxal 5'-phosphate + ADP + H(+). Functionally, required for synthesis of pyridoxal-5-phosphate from vitamin B6. Important for bud site selection. The polypeptide is Putative pyridoxal kinase BUD17 (BUD17) (Saccharomyces cerevisiae (strain ATCC 204508 / S288c) (Baker's yeast)).